A 125-amino-acid polypeptide reads, in one-letter code: Small ribosomal subunit protein uS12c (125 aa).

The disordered stretch occupies residues 1 to 23 (MPTLEHLTRSPRKKIKRKTKSPA). Over residues 9 to 20 (RSPRKKIKRKTK) the composition is skewed to basic residues.

This sequence belongs to the universal ribosomal protein uS12 family. In terms of assembly, part of the 30S ribosomal subunit.

The protein resides in the plastid. Its subcellular location is the chloroplast. Its function is as follows. With S4 and S5 plays an important role in translational accuracy. Located at the interface of the 30S and 50S subunits. In Euglena gracilis, this protein is Small ribosomal subunit protein uS12c (rps12).